A 146-amino-acid polypeptide reads, in one-letter code: Putative pre-16S rRNA nuclease (146 aa).

This sequence belongs to the YqgF nuclease family.

The protein resides in the cytoplasm. Functionally, could be a nuclease involved in processing of the 5'-end of pre-16S rRNA. The chain is Putative pre-16S rRNA nuclease from Paraburkholderia xenovorans (strain LB400).